We begin with the raw amino-acid sequence, 577 residues long: Proline--tRNA ligase (577 aa).

This sequence belongs to the class-II aminoacyl-tRNA synthetase family. ProS type 1 subfamily. As to quaternary structure, homodimer.

Its subcellular location is the cytoplasm. It carries out the reaction tRNA(Pro) + L-proline + ATP = L-prolyl-tRNA(Pro) + AMP + diphosphate. Its function is as follows. Catalyzes the attachment of proline to tRNA(Pro) in a two-step reaction: proline is first activated by ATP to form Pro-AMP and then transferred to the acceptor end of tRNA(Pro). As ProRS can inadvertently accommodate and process non-cognate amino acids such as alanine and cysteine, to avoid such errors it has two additional distinct editing activities against alanine. One activity is designated as 'pretransfer' editing and involves the tRNA(Pro)-independent hydrolysis of activated Ala-AMP. The other activity is designated 'posttransfer' editing and involves deacylation of mischarged Ala-tRNA(Pro). The misacylated Cys-tRNA(Pro) is not edited by ProRS. The polypeptide is Proline--tRNA ligase (Helicobacter pylori (strain Shi470)).